The chain runs to 495 residues: 3-octaprenyl-4-hydroxybenzoate carboxy-lyase (495 aa).

A Mn(2+)-binding site is contributed by asparagine 171. Prenylated FMN-binding positions include 174-176, 188-190, and 193-194; these read IYR, RWL, and RG. Residue glutamate 237 participates in Mn(2+) binding. The active-site Proton donor is aspartate 286.

The protein belongs to the UbiD family. As to quaternary structure, homohexamer. Prenylated FMN is required as a cofactor. Mn(2+) serves as cofactor.

It is found in the cell membrane. The catalysed reaction is a 4-hydroxy-3-(all-trans-polyprenyl)benzoate + H(+) = a 2-(all-trans-polyprenyl)phenol + CO2. It participates in cofactor biosynthesis; ubiquinone biosynthesis. In terms of biological role, catalyzes the decarboxylation of 3-octaprenyl-4-hydroxy benzoate to 2-octaprenylphenol, an intermediate step in ubiquinone biosynthesis. In Hamiltonella defensa subsp. Acyrthosiphon pisum (strain 5AT), this protein is 3-octaprenyl-4-hydroxybenzoate carboxy-lyase.